A 433-amino-acid chain; its full sequence is Type I acyl-CoA thioesterase mpaH' (433 aa).

Residues 58–246 (HGVGLPKELY…IKALFGTTAD (189 aa)) are abhydrolase domain. Substrate is bound at residue V60. Residue S139 is the Nucleophile of the active site. F140 lines the substrate pocket. Active-site residues include D163 and H365.

Belongs to the AB hydrolase superfamily. MpaH hydrolase family. In terms of assembly, homodimer.

The protein localises to the peroxisome matrix. The enzyme catalyses mycophenolyl-CoA + H2O = mycophenolate + CoA + H(+). It participates in secondary metabolite biosynthesis; terpenoid biosynthesis. In terms of biological role, type I acyl-CoA thioesterase; part of the gene cluster that mediates the biosynthesis of mycophenolic acid (MPA), the first isolated antibiotic natural product in the world obtained from a culture of Penicillium brevicompactum in 1893. MpaH' acts as a peroxisomal acyl-CoA hydrolase that converts MPA-CoA into the final product MPA. The first step of the pathway is the synthesis of 5-methylorsellinic acid (5MOA) by the cytosolic polyketide synthase mpaC. 5MOA is then converted to the phthalide compound 5,7-dihydroxy-4,6-dimethylphthalide (DHMP) by the endoplasmic reticulum-bound cytochrome P450 monooxygenase mpaDE. MpaDE first catalyzes hydroxylation of 5-MOA to 4,6-dihydroxy-2-(hydroxymethyl)-3-methylbenzoic acid (DHMB). MpaDE then acts as a lactone synthase that catalyzes the ring closure to convert DHMB into DHMP. The next step is the prenylation of DHMP by the Golgi apparatus-associated prenyltransferase mpaA to yield farnesyl-DHMP (FDHMP). The ER-bound oxygenase mpaB then mediates the oxidative cleavage the C19-C20 double bond in FDHMP to yield FDHMP-3C via a mycophenolic aldehyde intermediate. The O-methyltransferase mpaG catalyzes the methylation of FDHMP-3C to yield MFDHMP-3C. After the cytosolic methylation of FDHMP-3C, MFDHMP-3C enters into peroxisomes probably via free diffusion due to its low molecular weight. Upon a peroxisomal CoA ligation reaction, catalyzed by a beta-oxidation component enzyme acyl-CoA ligase ACL891, MFDHMP-3C-CoA would then be restricted to peroxisomes for the following beta-oxidation pathway steps. The peroxisomal beta-oxidation machinery than converts MFDHMP-3C-CoA into MPA_CoA, via a beta-oxidation chain-shortening process. Finally mpaH acts as a peroxisomal acyl-CoA hydrolase with high substrate specificity toward MPA-CoA to release the final product MPA. This Penicillium brevicompactum protein is Type I acyl-CoA thioesterase mpaH'.